The following is a 435-amino-acid chain: Nucleoredoxin (435 aa).

Ser2 bears the N-acetylserine mark. The Thioredoxin domain occupies 167 to 321 (PKPFREVIAG…VLELSDSNAV (155 aa)).

This sequence belongs to the nucleoredoxin family. As to quaternary structure, associates with the phosphatase 2A holoenzyme. Interacts with PPP2CA; the interaction is direct. Interacts with DVL1 (via PDZ domain); the interaction is direct and regulated by oxidative stress.

The protein resides in the cytoplasm. The protein localises to the cytosol. Its subcellular location is the nucleus. The enzyme catalyses [protein]-dithiol + NAD(+) = [protein]-disulfide + NADH + H(+). It carries out the reaction [protein]-dithiol + NADP(+) = [protein]-disulfide + NADPH + H(+). Functionally, functions as a redox-dependent negative regulator of the Wnt signaling pathway, possibly by preventing ubiquitination of DVL3 by the BCR(KLHL12) complex. May also function as a transcriptional regulator act as a regulator of protein phosphatase 2A (PP2A). The polypeptide is Nucleoredoxin (NXN) (Bos taurus (Bovine)).